Here is a 413-residue protein sequence, read N- to C-terminus: von Willebrand factor A domain-containing protein 1 (413 aa).

Residues 1–20 (MLPWTVIGLALSLRLARSGA) form the signal peptide. The VWFA domain occupies 32–211 (DLLFLLDSSA…ALRGSILDAM (180 aa)). Ser72, Ser78, and Ser91 each carry phosphoserine. 2 Fibronectin type-III domains span residues 212–302 (WPQQ…TLPE) and 305–395 (GPEL…TPEG). N-linked (GlcNAc...) asparagine glycosylation is present at Asn262. Positions 385–413 (ALSAKACTPEGERSRAPRPQPQRTGGREP) are disordered.

Homodimer or homomultimer; disulfide-linked. Interacts with HSPG2. Post-translationally, N-glycosylated.

The protein localises to the secreted. Its subcellular location is the extracellular space. It localises to the extracellular matrix. The protein resides in the basement membrane. Its function is as follows. Promotes matrix assembly. Involved in the organization of skeletal muscles and in the formation of neuromuscular junctions. The chain is von Willebrand factor A domain-containing protein 1 (VWA1) from Bos taurus (Bovine).